Here is a 341-residue protein sequence, read N- to C-terminus: uncharacterized protein (341 aa).

The next 10 helical transmembrane spans lie at 10 to 30, 42 to 62, 107 to 127, 129 to 149, 155 to 175, 192 to 212, 226 to 246, 263 to 283, 290 to 310, and 313 to 333; these read ALGV…SFLT, PFLI…PWYF, LGFC…LGFT, VASF…LGTI, FTLS…IVVT, ALGN…SVMV, LFFG…LIIL, LIVL…WVIA, LLVT…DILL, and HYLN…FIVV.

This sequence belongs to the TPT transporter family.

The protein resides in the vacuole membrane. It is found in the golgi apparatus membrane. This is an uncharacterized protein from Schizosaccharomyces pombe (strain 972 / ATCC 24843) (Fission yeast).